The primary structure comprises 58 residues: SPbeta prophage-derived uncharacterized protein YotN (58 aa).

In Bacillus subtilis (strain 168), this protein is SPbeta prophage-derived uncharacterized protein YotN (yotN).